We begin with the raw amino-acid sequence, 438 residues long: GDP-mannose 6-dehydrogenase (438 aa).

The NAD(+) site is built by tyrosine 10, valine 11, aspartate 30, lysine 35, threonine 86, and threonine 124. GDP-alpha-D-mannuronate-binding residues include glutamate 161, lysine 210, asparagine 214, histidine 217, asparagine 225, tyrosine 256, tyrosine 257, arginine 259, phenylalanine 262, and glycine 265. The active site involves cysteine 268. Residue lysine 271 participates in NAD(+) binding. Residue lysine 324 participates in GDP-alpha-D-mannuronate binding. Arginine 331 provides a ligand contact to NAD(+).

This sequence belongs to the UDP-glucose/GDP-mannose dehydrogenase family.

It carries out the reaction GDP-alpha-D-mannose + 2 NAD(+) + H2O = GDP-alpha-D-mannuronate + 2 NADH + 3 H(+). It participates in glycan biosynthesis; alginate biosynthesis. Its function is as follows. Catalyzes the oxidation of guanosine diphospho-D-mannose (GDP-D-mannose) to GDP-D-mannuronic acid, a precursor for alginate polymerization. The alginate layer causes a mucoid phenotype and provides a protective barrier against host immune defenses and antibiotics. This is GDP-mannose 6-dehydrogenase (algD) from Pseudomonas syringae pv. syringae.